The sequence spans 269 residues: Energy-coupling factor transporter ATP-binding protein EcfA1 (269 aa).

The region spanning 8–242 is the ABC transporter domain; sequence IVFKNVSFQY…AEELTTIGLD (235 aa). 42–49 contributes to the ATP binding site; it reads GHNGSGKS.

This sequence belongs to the ABC transporter superfamily. Energy-coupling factor EcfA family. Forms a stable energy-coupling factor (ECF) transporter complex composed of 2 membrane-embedded substrate-binding proteins (S component), 2 ATP-binding proteins (A component) and 2 transmembrane proteins (T component).

The protein resides in the cell membrane. Functionally, ATP-binding (A) component of a common energy-coupling factor (ECF) ABC-transporter complex. Unlike classic ABC transporters this ECF transporter provides the energy necessary to transport a number of different substrates. The protein is Energy-coupling factor transporter ATP-binding protein EcfA1 of Staphylococcus aureus (strain MSSA476).